A 522-amino-acid polypeptide reads, in one-letter code: Protein nucleotidyltransferase YdiU (522 aa).

Residues Gly109, Gly111, Arg112, Lys132, Asp144, Gly145, Arg195, and Arg202 each contribute to the ATP site. Catalysis depends on Asp271, which acts as the Proton acceptor. 2 residues coordinate Mg(2+): Asn272 and Asp281. Asp281 is a binding site for ATP.

This sequence belongs to the SELO family. Mg(2+) serves as cofactor. It depends on Mn(2+) as a cofactor.

It catalyses the reaction L-seryl-[protein] + ATP = 3-O-(5'-adenylyl)-L-seryl-[protein] + diphosphate. It carries out the reaction L-threonyl-[protein] + ATP = 3-O-(5'-adenylyl)-L-threonyl-[protein] + diphosphate. The enzyme catalyses L-tyrosyl-[protein] + ATP = O-(5'-adenylyl)-L-tyrosyl-[protein] + diphosphate. The catalysed reaction is L-histidyl-[protein] + UTP = N(tele)-(5'-uridylyl)-L-histidyl-[protein] + diphosphate. It catalyses the reaction L-seryl-[protein] + UTP = O-(5'-uridylyl)-L-seryl-[protein] + diphosphate. It carries out the reaction L-tyrosyl-[protein] + UTP = O-(5'-uridylyl)-L-tyrosyl-[protein] + diphosphate. Nucleotidyltransferase involved in the post-translational modification of proteins. It can catalyze the addition of adenosine monophosphate (AMP) or uridine monophosphate (UMP) to a protein, resulting in modifications known as AMPylation and UMPylation. This is Protein nucleotidyltransferase YdiU from Burkholderia cenocepacia (strain HI2424).